Here is a 331-residue protein sequence, read N- to C-terminus: Holliday junction branch migration complex subunit RuvB (331 aa).

Residues 1-182 (MSSDTLHKYE…FGIPLHLEFY (182 aa)) form a large ATPase domain (RuvB-L) region. ATP is bound by residues leucine 21, arginine 22, glycine 63, lysine 66, threonine 67, threonine 68, 129–131 (EDY), arginine 172, tyrosine 182, and arginine 219. Residue threonine 67 participates in Mg(2+) binding. Positions 183–254 (SVDELVLVIK…FANSALFRLG (72 aa)) are small ATPAse domain (RuvB-S). The tract at residues 257-331 (GAGFDKMDLK…FEYLLSSKYI (75 aa)) is head domain (RuvB-H). Arginine 310 and arginine 315 together coordinate DNA.

It belongs to the RuvB family. Homohexamer. Forms an RuvA(8)-RuvB(12)-Holliday junction (HJ) complex. HJ DNA is sandwiched between 2 RuvA tetramers; dsDNA enters through RuvA and exits via RuvB. An RuvB hexamer assembles on each DNA strand where it exits the tetramer. Each RuvB hexamer is contacted by two RuvA subunits (via domain III) on 2 adjacent RuvB subunits; this complex drives branch migration. In the full resolvosome a probable DNA-RuvA(4)-RuvB(12)-RuvC(2) complex forms which resolves the HJ.

Its subcellular location is the cytoplasm. It carries out the reaction ATP + H2O = ADP + phosphate + H(+). The RuvA-RuvB-RuvC complex processes Holliday junction (HJ) DNA during genetic recombination and DNA repair, while the RuvA-RuvB complex plays an important role in the rescue of blocked DNA replication forks via replication fork reversal (RFR). RuvA specifically binds to HJ cruciform DNA, conferring on it an open structure. The RuvB hexamer acts as an ATP-dependent pump, pulling dsDNA into and through the RuvAB complex. RuvB forms 2 homohexamers on either side of HJ DNA bound by 1 or 2 RuvA tetramers; 4 subunits per hexamer contact DNA at a time. Coordinated motions by a converter formed by DNA-disengaged RuvB subunits stimulates ATP hydrolysis and nucleotide exchange. Immobilization of the converter enables RuvB to convert the ATP-contained energy into a lever motion, pulling 2 nucleotides of DNA out of the RuvA tetramer per ATP hydrolyzed, thus driving DNA branch migration. The RuvB motors rotate together with the DNA substrate, which together with the progressing nucleotide cycle form the mechanistic basis for DNA recombination by continuous HJ branch migration. Branch migration allows RuvC to scan DNA until it finds its consensus sequence, where it cleaves and resolves cruciform DNA. The chain is Holliday junction branch migration complex subunit RuvB from Anaplasma marginale (strain St. Maries).